The sequence spans 86 residues: ATP synthase subunit c (86 aa).

2 helical membrane passes run 13–33 and 63–83; these read FFATGLAYLGAGISILAAGLA and ILGQAMVETSGIYALIIAFIL.

It belongs to the ATPase C chain family. As to quaternary structure, F-type ATPases have 2 components, F(1) - the catalytic core - and F(0) - the membrane proton channel. F(1) has five subunits: alpha(3), beta(3), gamma(1), delta(1), epsilon(1). F(0) has three main subunits: a(1), b(2) and c(10-14). The alpha and beta chains form an alternating ring which encloses part of the gamma chain. F(1) is attached to F(0) by a central stalk formed by the gamma and epsilon chains, while a peripheral stalk is formed by the delta and b chains.

The protein localises to the cell membrane. F(1)F(0) ATP synthase produces ATP from ADP in the presence of a proton or sodium gradient. F-type ATPases consist of two structural domains, F(1) containing the extramembraneous catalytic core and F(0) containing the membrane proton channel, linked together by a central stalk and a peripheral stalk. During catalysis, ATP synthesis in the catalytic domain of F(1) is coupled via a rotary mechanism of the central stalk subunits to proton translocation. In terms of biological role, key component of the F(0) channel; it plays a direct role in translocation across the membrane. A homomeric c-ring of between 10-14 subunits forms the central stalk rotor element with the F(1) delta and epsilon subunits. This Acholeplasma laidlawii (strain PG-8A) protein is ATP synthase subunit c.